Here is a 301-residue protein sequence, read N- to C-terminus: Acetylglutamate kinase (301 aa).

Substrate is bound by residues 68–69 (GG), arginine 90, and asparagine 195.

Belongs to the acetylglutamate kinase family. ArgB subfamily.

The protein resides in the cytoplasm. The enzyme catalyses N-acetyl-L-glutamate + ATP = N-acetyl-L-glutamyl 5-phosphate + ADP. It functions in the pathway amino-acid biosynthesis; L-arginine biosynthesis; N(2)-acetyl-L-ornithine from L-glutamate: step 2/4. Functionally, catalyzes the ATP-dependent phosphorylation of N-acetyl-L-glutamate. The sequence is that of Acetylglutamate kinase from Ectopseudomonas mendocina (strain ymp) (Pseudomonas mendocina).